A 242-amino-acid chain; its full sequence is U1 small nuclear ribonucleoprotein C (242 aa).

Residues 3-35 (YLGDYCDVYLTHDSMSVRKAHNSGRNHLRNVVE) form a Matrin-type; degenerate zinc finger. Residues 60–242 (GQASSNPMLQ…SSPGPSQEGK (183 aa)) form a disordered region. 4 stretches are compositionally biased toward pro residues: residues 90–107 (MLPPPPPFGMPGAPPGAP), 136–149 (PPMPGDLPPPPLPN), 156–183 (PFPPPNGFPPNFQFPPPGAAGFPPPPIP), and 201–213 (PVPPPGFPLPGAP). Positions 231–242 (PASSPGPSQEGK) are enriched in polar residues.

It belongs to the U1 small nuclear ribonucleoprotein C family. As to quaternary structure, U1 snRNP is composed of the 7 core Sm proteins B/B', D1, D2, D3, E, F and G that assemble in a heptameric protein ring on the Sm site of the small nuclear RNA to form the core snRNP, and at least 3 U1 snRNP-specific proteins U1-70K, U1-A and U1-C. U1-C interacts with U1 snRNA and the 5' splice-site region of the pre-mRNA.

It is found in the nucleus. Its function is as follows. Component of the spliceosomal U1 snRNP, which is essential for recognition of the pre-mRNA 5' splice-site and the subsequent assembly of the spliceosome. U1-C is directly involved in initial 5' splice-site recognition for both constitutive and regulated alternative splicing. The interaction with the 5' splice-site seems to precede base-pairing between the pre-mRNA and the U1 snRNA. Stimulates commitment or early (E) complex formation by stabilizing the base pairing of the 5' end of the U1 snRNA and the 5' splice-site region. This is U1 small nuclear ribonucleoprotein C from Ajellomyces capsulatus (strain G186AR / H82 / ATCC MYA-2454 / RMSCC 2432) (Darling's disease fungus).